The chain runs to 425 residues: Serine--tRNA ligase (425 aa).

230–232 provides a ligand contact to L-serine; that stretch reads TAE. 261-263 contributes to the ATP binding site; that stretch reads RSE. Glutamate 284 lines the L-serine pocket. 348–351 is a binding site for ATP; the sequence is EISS. Serine 384 serves as a coordination point for L-serine.

The protein belongs to the class-II aminoacyl-tRNA synthetase family. Type-1 seryl-tRNA synthetase subfamily. As to quaternary structure, homodimer. The tRNA molecule binds across the dimer.

The protein localises to the cytoplasm. The catalysed reaction is tRNA(Ser) + L-serine + ATP = L-seryl-tRNA(Ser) + AMP + diphosphate + H(+). It carries out the reaction tRNA(Sec) + L-serine + ATP = L-seryl-tRNA(Sec) + AMP + diphosphate + H(+). It participates in aminoacyl-tRNA biosynthesis; selenocysteinyl-tRNA(Sec) biosynthesis; L-seryl-tRNA(Sec) from L-serine and tRNA(Sec): step 1/1. In terms of biological role, catalyzes the attachment of serine to tRNA(Ser). Is also able to aminoacylate tRNA(Sec) with serine, to form the misacylated tRNA L-seryl-tRNA(Sec), which will be further converted into selenocysteinyl-tRNA(Sec). The polypeptide is Serine--tRNA ligase (Streptococcus pyogenes serotype M1).